The sequence spans 443 residues: Nuclear hormone receptor family member nhr-60 (443 aa).

The span at 1–20 (MIQSSSSISQDSLDLPSILS) shows a compositional bias: low complexity. The segment at 1–40 (MIQSSSSISQDSLDLPSILSTFSADEPEDEPSPTAVKSTK) is disordered. Positions 44–121 (PTECLICGNS…VGMNPLAMEV (78 aa)) form a DNA-binding region, nuclear receptor. NR C4-type zinc fingers lie at residues 47 to 67 (CLIC…CNGC) and 83 to 104 (CKAK…CRAC). In terms of domain architecture, NR LBD spans 196-439 (NEFSGLEYLL…KDLVMRVIED (244 aa)). The disordered stretch occupies residues 225-249 (LRRDQLGPPRLPKPPSPGKPRDSQH). The segment covering 233–242 (PRLPKPPSPG) has biased composition (pro residues).

Belongs to the nuclear hormone receptor family.

It localises to the nucleus. In terms of biological role, orphan nuclear receptor (Potential). Required for embryonic and larval morphogenesis and probably for seam cell positioning and migration. The sequence is that of Nuclear hormone receptor family member nhr-60 from Caenorhabditis elegans.